The following is a 446-amino-acid chain: Citrate/sodium symporter (446 aa).

Topologically, residues 1-27 are cytoplasmic; it reads MTNMSQPPATEKKGVSDLLGFKIFGMP. A helical membrane pass occupies residues 28-44; that stretch reads LPLYAFALITLLLSHFY. Topologically, residues 45-50 are periplasmic; sequence NALPTD. Residues 51 to 71 traverse the membrane as a helical segment; that stretch reads IVGGFAIMFIIGAIFGEIGKR. Over 72 to 80 the chain is Cytoplasmic; sequence LPIFNKYIG. A helical membrane pass occupies residues 81–95; sequence GAPVMIFLVAAYFVY. The Periplasmic segment spans residues 96 to 115; that stretch reads AGIFTQKEIDAISNVMDKSN. A helical membrane pass occupies residues 116–130; it reads FLNLFIAVLITGAIL. Residues 131–136 are Cytoplasmic-facing; it reads SVNRRL. A helical membrane pass occupies residues 137 to 166; the sequence is LLKSLLGYIPTILMGIVGASIFGIAIGLVF. The Periplasmic portion of the chain corresponds to 167–181; sequence GIPVDRIMMLYVLPI. Na(+) is bound by residues Ile-181 and Gly-183. Residues 182–189 constitute an intramembrane region (helical); it reads MGGGNGAG. Citrate contacts are provided by Asn-186 and Gly-187. The Periplasmic segment spans residues 190–212; the sequence is AVPLSEIYHSVTGRSREEYYSTA. The helical transmembrane segment at 213-233 threads the bilayer; the sequence is IAILTIANIFAIVFAAVLDII. Over 234-264 the chain is Cytoplasmic; it reads GKKHTWLSGEGELVRKASFKVEEDEKTGQIT. The helical transmembrane segment at 265-287 threads the bilayer; that stretch reads HRETAVGLVLSTTCFLLAYVVAK. Topologically, residues 288-299 are periplasmic; the sequence is KILPSIGGVAIH. Residues 300-315 form a helical membrane-spanning segment; sequence YFAWMVLIVAALNASG. The Cytoplasmic portion of the chain corresponds to 316-327; the sequence is LCSPEIKAGAKR. The helical transmembrane segment at 328–351 threads the bilayer; the sequence is LSDFFSKQLLWVLMVGVGVCYTDL. At 352 to 359 the chain is on the periplasmic side; that stretch reads QEIINAIT. Residues 360 to 381 form a helical membrane-spanning segment; that stretch reads FANVVIAAIIVIGAVLGAAIGG. Over 382 to 398 the chain is Cytoplasmic; the sequence is WLMGFFPIESAITAGLC. The Na(+) site is built by Met-399 and Asn-401. The helical intramembrane region spans 399–406; that stretch reads MANRGGSG. Positions 402, 404, and 405 each coordinate citrate. The Cytoplasmic segment spans residues 407-416; the sequence is DLEVLSACNR. A helical transmembrane segment spans residues 417–438; sequence MNLISYAQISSRLGGGIVLVIA. Citrate is bound at residue Arg-428. Residues 439–446 are Periplasmic-facing; sequence SIVFGMMI.

It belongs to the 2-hydroxycarboxylate transporter (2-HCT) (TC 2.A.24) family. In terms of assembly, homodimer.

The protein localises to the cell inner membrane. It catalyses the reaction citrate(out) + 2 Na(+)(out) = citrate(in) + 2 Na(+)(in). With respect to regulation, in the absence of Na(+), transport is inhibited by the thiol reagents N-ethylmaleimide (NEM) and the methanethiosulfonate (MTS) derivatives MTSEA, MTSET and MTSES. However, inactivation by NEM, MTSES and MTSET is prevented by the presence of Na(+). In the absence of Na(+), the substrate citrate has no effect on the inactivation by permeable or impermeable thiol reagents. In contrast, when subsaturating concentrations of Na(+) are present, citrate significantly reduces inactivation, suggesting ordered binding of the substrate and co-ion; citrate is bound after Na(+). The membrane impermeable bulky maleimide AmdiS does not inactivate the transporter in right-side-out membrane vesicles. The apparent affinity for Na(+) decreases with increasing proton concentration. Protons cannot replace Na(+) in the translocation step but the decrease in apparent affinity for Na(+) towards lower pH suggests that protons can compete with Na(+) for the cation-binding sites. In terms of biological role, secondary active transporter that catalyzes the uptake of citrate across the membrane with the concomitant uptake of sodium. There are conflicting data regarding exact substrate stoichiometry: the sodium/citrate stoichiometry was predicted to be 1, but the latest studies suggest that CitS transports citrate in symport with 2 sodium ions. Transports citrate as a divalent citrate anion, H-citrate(2-). Shows narrow substrate specificity and is very specific, transporting only citrate and to a low extent citromalate. Symport of Na(+) is absolutely required in the range pH 5-7 because no uptake can be detected in the absence of Na(+). Lithium can replace Na(+) in the symport reaction but it takes about a 200-fold higher concentration of Li(+) over Na(+) to achieve the same rate of uptake. This is Citrate/sodium symporter from Klebsiella pneumoniae.